The primary structure comprises 237 residues: Class B acid phosphatase (237 aa).

Positions 1–25 (MRKLTLAFAAASLLFTLNSAVVARA) are cleaved as a signal peptide. Asp-69 (nucleophile) is an active-site residue. 2 residues coordinate Mg(2+): Asp-69 and Asp-71. Asp-71 functions as the Proton donor in the catalytic mechanism. Substrate-binding positions include 137–138 (TG) and Lys-177. Asp-192 contributes to the Mg(2+) binding site.

This sequence belongs to the class B bacterial acid phosphatase family. As to quaternary structure, homotetramer. Mg(2+) is required as a cofactor.

The protein localises to the periplasm. The catalysed reaction is a phosphate monoester + H2O = an alcohol + phosphate. Its function is as follows. Dephosphorylates several organic phosphate monoesters. Also has a phosphotransferase activity catalyzing the transfer of low-energy phosphate groups from organic phosphate monoesters to free hydroxyl groups of various organic compounds. The protein is Class B acid phosphatase of Klebsiella pneumoniae (strain 342).